The primary structure comprises 370 residues: Nematocyst expressed protein 4 (370 aa).

An N-terminal signal peptide occupies residues M1 to A19. The interval S34–D55 is disordered. Gly residues predominate over residues S36–G45. ShKT domains follow at residues C70–C102, C113–C149, and G155–H190. Intrachain disulfides connect C70-C102, C77-C95, C84-C99, C113-C149, C121-C142, C131-C146, C164-C183, and C173-C187. Residues P306–Y340 show a composition bias toward pro residues. Residues P306 to S370 form a disordered region. The segment covering H349–S370 has biased composition (basic residues).

Belongs to the NEP3 family. As to expression, nematocytes. In late planulae, transcripts are found throughout the ectoderm in nematocytes, with high concentration of expressing cells in the oral pole. In primary polyps, is expressed in nematocytes in the body wall and physa ectoderm and in the upper and lower pharynx.

It localises to the nematocyst. Its subcellular location is the secreted. The protein is Nematocyst expressed protein 4 of Nematostella vectensis (Starlet sea anemone).